The primary structure comprises 600 residues: Proline--tRNA ligase (600 aa).

The protein belongs to the class-II aminoacyl-tRNA synthetase family. ProS type 1 subfamily. As to quaternary structure, homodimer.

The protein localises to the cytoplasm. It catalyses the reaction tRNA(Pro) + L-proline + ATP = L-prolyl-tRNA(Pro) + AMP + diphosphate. In terms of biological role, catalyzes the attachment of proline to tRNA(Pro) in a two-step reaction: proline is first activated by ATP to form Pro-AMP and then transferred to the acceptor end of tRNA(Pro). As ProRS can inadvertently accommodate and process non-cognate amino acids such as alanine and cysteine, to avoid such errors it has two additional distinct editing activities against alanine. One activity is designated as 'pretransfer' editing and involves the tRNA(Pro)-independent hydrolysis of activated Ala-AMP. The other activity is designated 'posttransfer' editing and involves deacylation of mischarged Ala-tRNA(Pro). The misacylated Cys-tRNA(Pro) is not edited by ProRS. This is Proline--tRNA ligase from Prochlorococcus marinus (strain MIT 9211).